The following is a 270-amino-acid chain: 5'-nucleotidase SurE (270 aa).

4 residues coordinate a divalent metal cation: aspartate 14, aspartate 15, serine 46, and asparagine 104.

This sequence belongs to the SurE nucleotidase family. A divalent metal cation serves as cofactor.

The protein resides in the cytoplasm. The catalysed reaction is a ribonucleoside 5'-phosphate + H2O = a ribonucleoside + phosphate. Its function is as follows. Nucleotidase that shows phosphatase activity on nucleoside 5'-monophosphates. In Microcystis aeruginosa (strain NIES-843 / IAM M-2473), this protein is 5'-nucleotidase SurE.